The primary structure comprises 419 residues: Murein hydrolase activator EnvC (419 aa).

An N-terminal signal peptide occupies residues 1–34 (MTRAVKPRRFAIRPIIYASVLSAGVLLCAFSAHA). 2 coiled-coil regions span residues 35 to 124 (DERD…LDAA) and 155 to 271 (LNQA…ATRK). Basic and acidic residues predominate over residues 252-270 (EREAREAQAVRDRQKEATR). The tract at residues 252–290 (EREAREAQAVRDRQKEATRKGTTYKPTESEKSLMSRTGG) is disordered.

It belongs to the peptidase M23B family.

The protein localises to the periplasm. In terms of biological role, activator of the cell wall hydrolases AmiA and AmiB. Required for septal murein cleavage and daughter cell separation during cell division. In vitro, exhibits weak endoproteolytic activity on beta-casein. This chain is Murein hydrolase activator EnvC (envC), found in Escherichia coli (strain K12).